Consider the following 378-residue polypeptide: Queuine tRNA-ribosyltransferase (378 aa).

Residue D93 is the Proton acceptor of the active site. Residues 93–97, D147, Q189, and G216 contribute to the substrate site; that span reads DSGGF. The segment at 247-253 is RNA binding; it reads GVGTFRE. Residue D266 is the Nucleophile of the active site. Residues 271 to 275 form an RNA binding; important for wobble base 34 recognition region; it reads TRVAR. Zn(2+) contacts are provided by C308, C310, C313, and H339.

This sequence belongs to the queuine tRNA-ribosyltransferase family. Homodimer. Within each dimer, one monomer is responsible for RNA recognition and catalysis, while the other monomer binds to the replacement base PreQ1. It depends on Zn(2+) as a cofactor.

It carries out the reaction 7-aminomethyl-7-carbaguanine + guanosine(34) in tRNA = 7-aminomethyl-7-carbaguanosine(34) in tRNA + guanine. It functions in the pathway tRNA modification; tRNA-queuosine biosynthesis. In terms of biological role, catalyzes the base-exchange of a guanine (G) residue with the queuine precursor 7-aminomethyl-7-deazaguanine (PreQ1) at position 34 (anticodon wobble position) in tRNAs with GU(N) anticodons (tRNA-Asp, -Asn, -His and -Tyr). Catalysis occurs through a double-displacement mechanism. The nucleophile active site attacks the C1' of nucleotide 34 to detach the guanine base from the RNA, forming a covalent enzyme-RNA intermediate. The proton acceptor active site deprotonates the incoming PreQ1, allowing a nucleophilic attack on the C1' of the ribose to form the product. After dissociation, two additional enzymatic reactions on the tRNA convert PreQ1 to queuine (Q), resulting in the hypermodified nucleoside queuosine (7-(((4,5-cis-dihydroxy-2-cyclopenten-1-yl)amino)methyl)-7-deazaguanosine). This is Queuine tRNA-ribosyltransferase from Gloeobacter violaceus (strain ATCC 29082 / PCC 7421).